We begin with the raw amino-acid sequence, 411 residues long: Anaerobic nitric oxide reductase flavorubredoxin homolog (411 aa).

Positions 30–210 are zinc metallo-hydrolase; the sequence is LRGSSYNSYL…PFSRLVTPKI (181 aa). His-79, Glu-81, Asp-83, His-147, Asp-166, His-227, Cys-360, Cys-363, Cys-393, and Cys-396 together coordinate Fe cation. The region spanning 355–406 is the Rubredoxin-like domain; sequence GPRMQCSVCQWIYDPAKGEPMQDVAPGTPWSEVPDNFLCPECSLGKDVFDEL.

This sequence in the N-terminal section; belongs to the zinc metallo-hydrolase group 3 family. As to quaternary structure, homotetramer. Fe cation serves as cofactor.

The protein localises to the cytoplasm. Its pathway is nitrogen metabolism; nitric oxide reduction. In terms of biological role, anaerobic nitric oxide reductase; uses NADH to detoxify nitric oxide (NO), protecting several 4Fe-4S NO-sensitive enzymes. Has at least 2 reductase partners, only one of which (NorW, flavorubredoxin reductase) has been identified. NO probably binds to the di-iron center. Also able to function as an aerobic oxygen reductase. This chain is Anaerobic nitric oxide reductase flavorubredoxin homolog, found in Escherichia coli O157:H7.